Reading from the N-terminus, the 54-residue chain is Glutathione S-transferase 6.7 (54 aa).

The protein belongs to the GST superfamily. Theta family. Homodimer. Post-translationally, the N-terminus is blocked.

The protein resides in the cytoplasm. The catalysed reaction is RX + glutathione = an S-substituted glutathione + a halide anion + H(+). Its function is as follows. Conjugation of reduced glutathione to a wide number of exogenous and endogenous hydrophobic electrophiles. The polypeptide is Glutathione S-transferase 6.7 (Dicentrarchus labrax (European seabass)).